The primary structure comprises 272 residues: Ribosomal RNA small subunit methyltransferase A (272 aa).

6 residues coordinate S-adenosyl-L-methionine: N18, L20, G45, E66, D91, and N113.

It belongs to the class I-like SAM-binding methyltransferase superfamily. rRNA adenine N(6)-methyltransferase family. RsmA subfamily.

The protein localises to the cytoplasm. The catalysed reaction is adenosine(1518)/adenosine(1519) in 16S rRNA + 4 S-adenosyl-L-methionine = N(6)-dimethyladenosine(1518)/N(6)-dimethyladenosine(1519) in 16S rRNA + 4 S-adenosyl-L-homocysteine + 4 H(+). Its function is as follows. Specifically dimethylates two adjacent adenosines (A1518 and A1519) in the loop of a conserved hairpin near the 3'-end of 16S rRNA in the 30S particle. May play a critical role in biogenesis of 30S subunits. The sequence is that of Ribosomal RNA small subunit methyltransferase A from Yersinia enterocolitica serotype O:8 / biotype 1B (strain NCTC 13174 / 8081).